Here is a 106-residue protein sequence, read N- to C-terminus: Nucleoid-associated protein Noc_2594 (106 aa).

Disordered regions lie at residues 1–20 and 85–106; these read MKGGLGNLMKQAQQLQSNME and QSKEKMSSMTSGMLPPGFKLPL. Over residues 10 to 20 the composition is skewed to polar residues; that stretch reads KQAQQLQSNME.

The protein belongs to the YbaB/EbfC family. As to quaternary structure, homodimer.

The protein resides in the cytoplasm. The protein localises to the nucleoid. Its function is as follows. Binds to DNA and alters its conformation. May be involved in regulation of gene expression, nucleoid organization and DNA protection. The protein is Nucleoid-associated protein Noc_2594 of Nitrosococcus oceani (strain ATCC 19707 / BCRC 17464 / JCM 30415 / NCIMB 11848 / C-107).